A 905-amino-acid chain; its full sequence is DNA-directed RNA polymerase subunit Rpo1N (905 aa).

8 residues coordinate Zn(2+): cysteine 60, cysteine 63, cysteine 70, histidine 73, cysteine 100, cysteine 103, cysteine 147, and cysteine 150. Mg(2+) contacts are provided by aspartate 461, aspartate 463, and aspartate 465.

The protein belongs to the RNA polymerase beta' chain family. In terms of assembly, part of the RNA polymerase complex. The cofactor is Mg(2+). Requires Zn(2+) as cofactor.

It is found in the cytoplasm. The enzyme catalyses RNA(n) + a ribonucleoside 5'-triphosphate = RNA(n+1) + diphosphate. Functionally, DNA-dependent RNA polymerase (RNAP) catalyzes the transcription of DNA into RNA using the four ribonucleoside triphosphates as substrates. Forms the clamp head domain. The polypeptide is DNA-directed RNA polymerase subunit Rpo1N (Thermococcus celer).